Here is a 281-residue protein sequence, read N- to C-terminus: NADPH-dependent 7-cyano-7-deazaguanine reductase (281 aa).

87-89 (IES) lines the substrate pocket. 89-90 (SK) contacts NADPH. The active-site Thioimide intermediate is the Cys-188. Residue Asp-195 is the Proton donor of the active site. 227 to 228 (HE) contacts substrate. Position 256–257 (256–257 (RG)) interacts with NADPH.

The protein belongs to the GTP cyclohydrolase I family. QueF type 2 subfamily. Homodimer.

It is found in the cytoplasm. It carries out the reaction 7-aminomethyl-7-carbaguanine + 2 NADP(+) = 7-cyano-7-deazaguanine + 2 NADPH + 3 H(+). It participates in tRNA modification; tRNA-queuosine biosynthesis. Its function is as follows. Catalyzes the NADPH-dependent reduction of 7-cyano-7-deazaguanine (preQ0) to 7-aminomethyl-7-deazaguanine (preQ1). In Photobacterium profundum (strain SS9), this protein is NADPH-dependent 7-cyano-7-deazaguanine reductase.